The sequence spans 197 residues: Ribonuclease HII (197 aa).

One can recognise an RNase H type-2 domain in the interval 11-197 (HLIAGVDEVG…FAPVKKILGL (187 aa)). Asp-17, Glu-18, and Asp-109 together coordinate a divalent metal cation.

The protein belongs to the RNase HII family. It depends on Mn(2+) as a cofactor. The cofactor is Mg(2+).

It is found in the cytoplasm. It carries out the reaction Endonucleolytic cleavage to 5'-phosphomonoester.. In terms of biological role, endonuclease that specifically degrades the RNA of RNA-DNA hybrids. The chain is Ribonuclease HII from Actinobacillus pleuropneumoniae serotype 7 (strain AP76).